Reading from the N-terminus, the 165-residue chain is Regulatory protein RecX (165 aa).

It belongs to the RecX family.

It localises to the cytoplasm. Its function is as follows. Modulates RecA activity. This is Regulatory protein RecX from Cronobacter sakazakii (strain ATCC BAA-894) (Enterobacter sakazakii).